The chain runs to 533 residues: NAD(P)H-quinone oxidoreductase chain 4 2 (533 aa).

14 consecutive transmembrane segments (helical) span residues 5-25, 33-53, 86-106, 114-134, 135-155, 168-188, 208-228, 242-262, 276-296, 310-330, 331-351, 384-404, 416-436, and 462-482; these read FPWL…IPVL, VRWY…MVFW, LAVP…FAAW, LFYF…AAQD, LILF…LISI, FILY…GMAF, ALEL…LPIF, SAPV…YGLI, FAPV…LTAF, ISHM…GLNG, AMLQ…LAGV, ASLA…FLGL, VGVI…LLSM, and TFIA…PKVA.

The protein belongs to the complex I subunit 4 family.

The protein resides in the cellular thylakoid membrane. It carries out the reaction a plastoquinone + NADH + (n+1) H(+)(in) = a plastoquinol + NAD(+) + n H(+)(out). The catalysed reaction is a plastoquinone + NADPH + (n+1) H(+)(in) = a plastoquinol + NADP(+) + n H(+)(out). Functionally, NDH-1 shuttles electrons from NAD(P)H, via FMN and iron-sulfur (Fe-S) centers, to quinones in the respiratory chain. The immediate electron acceptor for the enzyme in this species is believed to be plastoquinone. Couples the redox reaction to proton translocation (for every two electrons transferred, four hydrogen ions are translocated across the cytoplasmic membrane), and thus conserves the redox energy in a proton gradient. This is NAD(P)H-quinone oxidoreductase chain 4 2 from Thermosynechococcus vestitus (strain NIES-2133 / IAM M-273 / BP-1).